Reading from the N-terminus, the 246-residue chain is tRNA pseudouridine synthase A (246 aa).

The active-site Nucleophile is the aspartate 52. Tyrosine 111 contributes to the substrate binding site.

Belongs to the tRNA pseudouridine synthase TruA family. In terms of assembly, homodimer.

The enzyme catalyses uridine(38/39/40) in tRNA = pseudouridine(38/39/40) in tRNA. In terms of biological role, formation of pseudouridine at positions 38, 39 and 40 in the anticodon stem and loop of transfer RNAs. The protein is tRNA pseudouridine synthase A of Borreliella burgdorferi (strain ATCC 35210 / DSM 4680 / CIP 102532 / B31) (Borrelia burgdorferi).